The primary structure comprises 881 residues: Squamosa promoter-binding-like protein 1 (881 aa).

The tract at residues 49-69 (FPLGNSSNSSSSCSDEGNDKK) is disordered. Residues 53 to 62 (NSSNSSSSCS) show a composition bias toward low complexity. The sufficient and necessary for DNA binding stretch occupies residues 96–187 (PAKKTKSGAV…RKTNPEPGAN (92 aa)). The SBP-type zinc finger occupies 103-180 (GAVCQVENCE…AGHNKRRRKT (78 aa)). Zn(2+) is bound by residues Cys-106, Cys-111, Cys-128, His-131, Cys-147, Cys-150, His-154, and Cys-166. The Bipartite nuclear localization signal motif lies at 163–179 (KRSCRRRLAGHNKRRRK). A compositionally biased stretch (basic residues) spans 170 to 179 (LAGHNKRRRK). Disordered stretches follow at residues 170–193 (LAGH…PSDD) and 274–358 (FSAR…EDAQ). Over residues 275–284 (SARQDGTATE) the composition is skewed to polar residues. The span at 285–295 (NRSEKQVKMND) shows a compositional bias: basic and acidic residues. Positions 319–338 (PATSSLDYPSWIHQSSPPQT) are enriched in polar residues. Residues 339 to 356 (SRNSDSASDQSPSSSSED) show a composition bias toward low complexity.

Zn(2+) is required as a cofactor.

The protein resides in the nucleus. In terms of biological role, trans-acting factor that binds specifically to the consensus nucleotide sequence 5'-TNCGTACAA-3' of AP1 promoter. Binds specifically to the 5'-GTAC-3' core sequence. In Arabidopsis thaliana (Mouse-ear cress), this protein is Squamosa promoter-binding-like protein 1 (SPL1).